Reading from the N-terminus, the 297-residue chain is ATP synthase gamma chain (297 aa).

It belongs to the ATPase gamma chain family. As to quaternary structure, F-type ATPases have 2 components, CF(1) - the catalytic core - and CF(0) - the membrane proton channel. CF(1) has five subunits: alpha(3), beta(3), gamma(1), delta(1), epsilon(1). CF(0) has three main subunits: a, b and c.

The protein resides in the cell membrane. Its function is as follows. Produces ATP from ADP in the presence of a proton gradient across the membrane. The gamma chain is believed to be important in regulating ATPase activity and the flow of protons through the CF(0) complex. The protein is ATP synthase gamma chain of Micrococcus luteus (strain ATCC 4698 / DSM 20030 / JCM 1464 / CCM 169 / CCUG 5858 / IAM 1056 / NBRC 3333 / NCIMB 9278 / NCTC 2665 / VKM Ac-2230) (Micrococcus lysodeikticus).